Reading from the N-terminus, the 86-residue chain is Defensin-like protein a (86 aa).

Residues Met-1–Gly-23 form the signal peptide. 4 cysteine pairs are disulfide-bonded: Cys-33–Cys-81, Cys-43–Cys-67, Cys-51–Cys-76, and Cys-65–Cys-78.

It belongs to the DEFL family. In terms of tissue distribution, expressed specifically in anthers.

It localises to the secreted. Its function is as follows. Involved in self-incompatibility. This is Defensin-like protein a (SCRa) from Arabidopsis lyrata (Lyre-leaved rock-cress).